The chain runs to 189 residues: MPRPRRFRRILGEPRVVTFSPEASDEETGVEITLDEFEAIRLRDYHDIKQKKAAEIMGISQPTFHRTLTSARGKIAAALVEGRPIILKGGDYITDRRRYKCMDCQFEWISPEKEYKKCPDCGSENINVVSAETIPRFGRGGYGRGFGAGRGAPRVCKCIECGYEAPKTPGVPCRTEKCPKCGAPMCGAD.

Belongs to the UPF0251 family.

The polypeptide is UPF0251 protein MTH_1178 (Methanothermobacter thermautotrophicus (strain ATCC 29096 / DSM 1053 / JCM 10044 / NBRC 100330 / Delta H) (Methanobacterium thermoautotrophicum)).